Reading from the N-terminus, the 341-residue chain is 2-acylglycerol O-acyltransferase 3 (341 aa).

2 helical membrane-spanning segments follow: residues 29 to 49 and 50 to 70; these read YVLT…VLLF and TSLW…WDTP. A glycan (N-linked (GlcNAc...) asparagine) is linked at asparagine 126. The helical transmembrane segment at 137–157 threads the bilayer; it reads LFPGLRPWLAVLAGLFYLPVY.

This sequence belongs to the diacylglycerol acyltransferase family. In terms of processing, ubiquitinated. Ubiquitination leads to proteasomal degradation. Selectively expressed in the digestive system. Highly expressed in the ileum, and at lower level in jejunum, duodenum, colon, cecum and the rectum. Not expressed in the stomach and the esophagus and trachea. Expressed at very low level in liver.

The protein localises to the endoplasmic reticulum membrane. It is found in the cytoplasm. The protein resides in the perinuclear region. The catalysed reaction is a 2-acylglycerol + an acyl-CoA = a 1,2-diacylglycerol + CoA. The enzyme catalyses an acyl-CoA + a 1,2-diacyl-sn-glycerol = a triacyl-sn-glycerol + CoA. It carries out the reaction 2-(9Z-octadecenoyl)-glycerol + (9Z)-octadecenoyl-CoA = 1,2-di-(9Z-octadecenoyl)-sn-glycerol + CoA. It catalyses the reaction 2-(9Z-octadecenoyl)-glycerol + hexadecanoyl-CoA = 1-hexadecanoyl-2-(9Z-octadecenoyl)-sn-glycerol + CoA. The catalysed reaction is 1,2-di-(9Z-octadecenoyl)-sn-glycerol + (9Z)-octadecenoyl-CoA = 1,2,3-tri-(9Z-octadecenoyl)-glycerol + CoA. The enzyme catalyses 1-hexadecanoyl-2-(9Z-octadecenoyl)-sn-glycerol + hexadecanoyl-CoA = 1,3-dihexadecanoyl-2-(9Z-octadecenoyl)glycerol + CoA. It carries out the reaction all-trans-retinol + hexadecanoyl-CoA = all-trans-retinyl hexadecanoate + CoA. It catalyses the reaction 1-O-(9Z-octadecenyl)-glycerol + (9Z)-octadecenoyl-CoA = 1-O-(9Z-octadecyl)-3-(9Z-octadecenoyl)-glycerol + CoA. The catalysed reaction is 1-O-(9Z-octadecyl)-3-(9Z-octadecenoyl)-glycerol + (9Z)-octadecenoyl-CoA = 1-O-(9Z-octadecenyl)-2,3-di-(9Z-octadecenoyl)glycerol + CoA. Its pathway is glycerolipid metabolism; triacylglycerol biosynthesis. In terms of biological role, catalyzes the formation of diacylglycerol from 2-monoacylglycerol and fatty acyl-CoA. Also able to catalyze the terminal step in triacylglycerol synthesis by using diacylglycerol and fatty acyl-CoA as substrates. Has a preference toward palmitoyl-CoA and oleoyl-CoA. May be involved in absorption of dietary fat in the small intestine by catalyzing the resynthesis of triacylglycerol in enterocytes. Also able to use 1-monoalkylglycerol (1-MAkG) as an acyl acceptor for the synthesis of monoalkyl-monoacylglycerol (MAMAG). The polypeptide is 2-acylglycerol O-acyltransferase 3 (Homo sapiens (Human)).